The chain runs to 146 residues: Minor capsid protein P5 (146 aa).

Interacts with the major capsid protein.

It localises to the virion. Functionally, one of the minor capsid proteins that constitute a network internal to the major capsid proteins and outside the lipid membrane. The minor capsid proteins glue and stabilize the capsomers. This chain is Minor capsid protein P5, found in Paramecium bursaria Chlorella virus 1 (PBCV-1).